Here is a 902-residue protein sequence, read N- to C-terminus: MSQSKEDKIRSILEAKNIKSNFQNKENLSEFNEKKASKRAEDLLDVYYNTLSTADMEFPYWYNREYRKSDGDIPVVRRAKALKAAFSHMTPNIIPGEKIVMQKTRHYRGSFPMPWVSESFFVAQGEQMREEAKKLASNTADELTKFGSGGGNVTESFGNVVSIAGKFGMRKEEVPVLVKMAKEWVGKSVEDLGFHYEKMMPDYDLKENLMSTLICMFDSGYTLPQGREVINYFYPLNYGLDGIIEMAKECKKAVAGNASGDGLIGMDRLYFYEAVIQVIEGLQTWILNYAKHAKYLESIETDLEAKKEYSDLVEILEHIAHKQPRTFREALQLTYTIHIASVNEDAISGMSIGRFGQILYPWYEQDIEKGLITKEEVIELLELYRIKITCIDCFASAGVNGGVLSGNTFNTLSIGGLKEDGSTGANELEELLLEASMRCRTPQPSLTMLYDEKLPEDFLMKAAECTKLGSGYPAWVNNSNGTTFMMKQFADEGMTVEEARAFALGGCLETSPGCWKQLTLNGKTYSIAGGAGQSAGSGVHFIANPKILELVLMNGKDYRMNIQVFEPHNKPLDTYEEVIEVFKDYYKQAINVLERANNIELDIWRKFDTSIINSLLKPDCLDKGQHIGNMGYRYNATLNVETCGTVTMVNSFAALKKLVYDDKAFTIEEIKDAILNNFGFKDALEVGNYSMADQVKVDKTGKYDAIYKACLDAPKYGNNDLYADNILKNYEVWLSKVCEEAQSLYAKKMYPCQISVSTHGPQGAATLATPDGRLSGTTYSDGSVSAYAGTDKNGVYALFESATIWDQAVVQNSQMNLKLHPTTIKGQQGTKKLLDLTRSYLRKGGFHIQYNVVDSETLKDAQKNPDNYRQLMVRVAGFTQYWCELGKPIQDEVIARTEYEGV.

In terms of domain architecture, PFL spans 38-774; the sequence is KRAEDLLDVY…ATLATPDGRL (737 aa). Residues S348 and C507 each coordinate 4-hydroxyphenylacetate. C507 functions as the Cysteine radical intermediate in the catalytic mechanism. Residue E509 is the Proton donor of the active site. Residues H540 and E641 each contribute to the 4-hydroxyphenylacetate site. Positions 782-902 constitute a Glycine radical domain; the sequence is GSVSAYAGTD…VIARTEYEGV (121 aa). G877 carries the glycine radical modification.

The protein belongs to the glycyl radical enzyme (GRE) family. HPAD subfamily. As to quaternary structure, heterooctamer consisting of 4 large (HpdB) subunits and 4 small (HpdC) subunits. Also forms a catalytically inactive homodimer. In terms of processing, phosphorylated on serine. Phosphorylation may trigger the formation of the active heterooctamers and thereby regulates enzyme activity. Requires the activating protein HpdA to generate the key active site glycyl radical that is involved in catalysis.

It carries out the reaction 4-hydroxyphenylacetate + H(+) = 4-methylphenol + CO2. It catalyses the reaction 3,4-dihydroxyphenylacetate + H(+) = 4-methylcatechol + CO2. The enzyme catalyses 2-hydroxy-2-(4-hydroxyphenyl)acetate + H(+) = 4-hydroxybenzyl alcohol + CO2. Its activity is regulated as follows. Enzyme activity catalyzed by the HPA decarboxylase complex is rapidly and irreversibly inactivated by oxygen. Competitively inhibited by p-hydroxyphenylacetamide. Not inhibited by m- or o-hydroxyphenyl-acetate, p-hydroxybenzoate or p-hydroxyphenylpropionate. Its function is as follows. Glycyl radical subunit of the HPA decarboxylase that decarboxylates phenylacetates with a hydroxyl group in the p-position. Active toward 4-hydroxyphenylacetate, 3,4-dihydroxyphenylacetate and to a lesser extent p-hydroxymandelate (2-hydroxy-2-(4-hydroxyphenyl)acetate), forming 4-methylphenol, 4-methylcatechol and 4-hydroxybenzylalcohol, respectively. Is likely involved in the catabolism of aromatic amino acids such as tyrosine fermentation. 4-methylphenol (p-cresol) formation provides metabolic toxicity, which may benefit the pathogen C.difficile by suppression of the endogenous gastrointestinal microflora, allowing the development of gastrointestinal infections. The large subunit is the catalytic subunit that binds the substrate. The sequence is that of 4-hydroxyphenylacetate decarboxylase glycyl radical subunit from Clostridioides difficile (Peptoclostridium difficile).